The primary structure comprises 167 residues: Aphrodisin (167 aa).

Positions methionine 1–alanine 16 are cleaved as a signal peptide. Pyrrolidone carboxylic acid is present on glutamine 17. 2 cysteine pairs are disulfide-bonded: cysteine 54-cysteine 58 and cysteine 73-cysteine 165. N-linked (GlcNAc...) asparagine glycosylation is found at asparagine 57 and asparagine 85.

Belongs to the calycin superfamily. Lipocalin family. Expressed in the vagina, uterus, and Bartholin's glands of female hamsters. Secreted in vaginal discharge.

It is found in the secreted. Acts as an aphrodisiac pheromone, reliably eliciting copulatory behavior from male hamster. This chain is Aphrodisin, found in Cricetus cricetus (Black-bellied hamster).